The chain runs to 606 residues: Pescadillo homolog (606 aa).

A BRCT domain is found at 346-447; that stretch reads LSTSLFSPYT…KILLEGPYGQ (102 aa). Residues 461–497 are disordered; that stretch reads YEGAYDPAAGPLGPSGVEQESESEADEVSEEDEEDQG. The span at 479–496 shows a compositional bias: acidic residues; sequence QESESEADEVSEEDEEDQ.

It belongs to the pescadillo family. As to quaternary structure, component of the NOP7 complex, composed of ERB1, NOP7 and YTM1. The complex is held together by ERB1, which interacts with NOP7 via its N-terminal domain and with YTM1 via a high-affinity interaction between the seven-bladed beta-propeller domains of the 2 proteins. The NOP7 complex associates with the 66S pre-ribosome.

Its subcellular location is the nucleus. The protein localises to the nucleolus. The protein resides in the nucleoplasm. Component of the NOP7 complex, which is required for maturation of the 25S and 5.8S ribosomal RNAs and formation of the 60S ribosome. This is Pescadillo homolog from Laccaria bicolor (strain S238N-H82 / ATCC MYA-4686) (Bicoloured deceiver).